The chain runs to 157 residues: Cyclic pyranopterin monophosphate synthase (157 aa).

Residues 74-76 and 112-113 each bind substrate; these read MCH and ME. Asp127 is a catalytic residue.

Belongs to the MoaC family. As to quaternary structure, homohexamer; trimer of dimers.

It carries out the reaction (8S)-3',8-cyclo-7,8-dihydroguanosine 5'-triphosphate = cyclic pyranopterin phosphate + diphosphate. It functions in the pathway cofactor biosynthesis; molybdopterin biosynthesis. Functionally, catalyzes the conversion of (8S)-3',8-cyclo-7,8-dihydroguanosine 5'-triphosphate to cyclic pyranopterin monophosphate (cPMP). In Campylobacter jejuni subsp. jejuni serotype O:2 (strain ATCC 700819 / NCTC 11168), this protein is Cyclic pyranopterin monophosphate synthase.